The following is a 311-amino-acid chain: Porphobilinogen deaminase (311 aa).

Cys-241 is modified (S-(dipyrrolylmethanemethyl)cysteine).

Belongs to the HMBS family. As to quaternary structure, monomer. Dipyrromethane is required as a cofactor.

The catalysed reaction is 4 porphobilinogen + H2O = hydroxymethylbilane + 4 NH4(+). It participates in porphyrin-containing compound metabolism; protoporphyrin-IX biosynthesis; coproporphyrinogen-III from 5-aminolevulinate: step 2/4. Functionally, tetrapolymerization of the monopyrrole PBG into the hydroxymethylbilane pre-uroporphyrinogen in several discrete steps. In Carboxydothermus hydrogenoformans (strain ATCC BAA-161 / DSM 6008 / Z-2901), this protein is Porphobilinogen deaminase.